Consider the following 350-residue polypeptide: UDP-N-acetylenolpyruvoylglucosamine reductase (350 aa).

Residues 24–195 (HVDATARWLL…VAVEFNLPLL (172 aa)) enclose the FAD-binding PCMH-type domain. The active site involves R172. The active-site Proton donor is the S245. Residue E342 is part of the active site.

Belongs to the MurB family. It depends on FAD as a cofactor.

It is found in the cytoplasm. It carries out the reaction UDP-N-acetyl-alpha-D-muramate + NADP(+) = UDP-N-acetyl-3-O-(1-carboxyvinyl)-alpha-D-glucosamine + NADPH + H(+). The protein operates within cell wall biogenesis; peptidoglycan biosynthesis. Its function is as follows. Cell wall formation. This Xanthomonas campestris pv. campestris (strain 8004) protein is UDP-N-acetylenolpyruvoylglucosamine reductase.